Here is a 505-residue protein sequence, read N- to C-terminus: OVARIAN TUMOR DOMAIN-containing deubiquitinating enzyme 6 (505 aa).

The tract at residues 1–191 (MTRILVQRGS…NSSDEHMPCY (191 aa)) is disordered. A compositionally biased stretch (low complexity) spans 9-30 (GSSGSSSNSSRPSSSSSSSSGS). Positions 51–72 (DEKQEEVTVVEKAECSDAKDVA) are enriched in basic and acidic residues. The span at 73-86 (VDSDEPADREDDEG) shows a compositional bias: acidic residues. Over residues 115–124 (PPVPAPPPKP) the composition is skewed to pro residues. The segment covering 159-173 (SSRSSPTGSHPSSPR) has biased composition (low complexity). Basic and acidic residues predominate over residues 174 to 188 (SHSENEGYNSSDEHM). The 124-residue stretch at 216 to 339 (FEIRRMLEDG…GNHYNSLVDP (124 aa)) folds into the OTU domain. Asp-224 is an active-site residue. Cys-227 serves as the catalytic Nucleophile. Residue His-332 is part of the active site. Residues 416-447 (RIGPKESSTSNAETSSSGARPSGSDSKPAEAV) are disordered. A compositionally biased stretch (low complexity) spans 421 to 441 (ESSTSNAETSSSGARPSGSDS). The region spanning 446–491 (AVKEKTVLSSSIEMVLSMGFSYAQAMEAYSIFGDDVDSMVCYVLET) is the UBA domain.

The protein belongs to the peptidase C85 family. As to quaternary structure, interacts with KDM1C. As to expression, mostly expressed in stems flowers and siliques, and, to a lower extent, in leaves, roots and seedlings.

It is found in the nucleus. It localises to the cytoplasm. The catalysed reaction is Thiol-dependent hydrolysis of ester, thioester, amide, peptide and isopeptide bonds formed by the C-terminal Gly of ubiquitin (a 76-residue protein attached to proteins as an intracellular targeting signal).. In terms of biological role, hydrolase that can remove conjugated ubiquitin from proteins in vitro and may therefore play an important regulatory role at the level of protein turnover by preventing degradation. Binds chromatin (e.g. nucleosomes and histones) and has enzymatic histone deubiquitinase activity, specific for the H2B histone. Can both repress (e.g. OSR2) and promote (e.g. AN3) the expression of target genes by associating with chromatin, deubiquitinating H2B and regulating its euchromatic histone marks (e.g. H3ac and H3K4me). In association with LDL1/KDM1C, involved in transcriptional gene repression via histone deubiquitination and demethylation. Promotes the concerted epigenetic regulation and repression (e.g. the removal of euchromatic histone acetylation, ubiquitination, and methylation marks) of a set of genes (e.g. GA20OX, WUS, OSR2, ARL and ABI5) that collectively limit plant growth thus stimulating plant growth and increasing cell size. The chain is OVARIAN TUMOR DOMAIN-containing deubiquitinating enzyme 6 from Arabidopsis thaliana (Mouse-ear cress).